A 199-amino-acid polypeptide reads, in one-letter code: Phycocyanobilin lyase CpcT (199 aa).

It belongs to the CpcT/CpeT biliprotein lyase family.

In terms of biological role, catalyzes the site-selective attachment of phycocyanobilin (PCB) to 'Cys-154' of C-phycocyanin subunit beta (CpcB) and to 'Cys-153' of phycoerythrocyanin subunit beta (PecB). Does not have chromophore lyase activity for ApcA1, ApcA2, ApcB, ApcD, ApcF or PecA. In Nostoc sp. (strain PCC 7120 / SAG 25.82 / UTEX 2576), this protein is Phycocyanobilin lyase CpcT (cpcT1).